The following is a 113-amino-acid chain: MNMTLNKRWCLTAILALSAVVYTSSSFAATDRLVIESGDSAQSRQQASMEKEQWNDTRSLRQKVNKRAEKEWDKTDVAFDAQDNCQKSANVNAYWEPNTLRCLDRRTGRAINP.

The N-terminal stretch at 1–28 is a signal peptide; the sequence is MNMTLNKRWCLTAILALSAVVYTSSSFA. The tract at residues 38 to 61 is disordered; the sequence is GDSAQSRQQASMEKEQWNDTRSLR. Residues 39–48 are compositionally biased toward polar residues; sequence DSAQSRQQAS. Residues 49–59 show a composition bias toward basic and acidic residues; that stretch reads MEKEQWNDTRS.

Belongs to the UPF0482 family.

This is UPF0482 protein KPK_2871 from Klebsiella pneumoniae (strain 342).